Here is a 393-residue protein sequence, read N- to C-terminus: Na(+)/H(+) antiporter NhaA 1 (393 aa).

11 consecutive transmembrane segments (helical) span residues 23–43, 58–78, 96–116, 126–146, 155–175, 178–198, 224–244, 265–285, 298–318, 334–354, and 367–387; these read AGGV…NSPF, LSLT…LVGL, MLPG…FTAF, GWAV…SLLG, VFLA…IAIF, AEIS…LFVM, GVHA…KAAP, VAFI…FAGL, IMLG…WLAI, LYGV…IGLL, and IGVL…LRLV.

The protein belongs to the NhaA Na(+)/H(+) (TC 2.A.33) antiporter family.

The protein localises to the cell inner membrane. The enzyme catalyses Na(+)(in) + 2 H(+)(out) = Na(+)(out) + 2 H(+)(in). Functionally, na(+)/H(+) antiporter that extrudes sodium in exchange for external protons. This Brucella anthropi (strain ATCC 49188 / DSM 6882 / CCUG 24695 / JCM 21032 / LMG 3331 / NBRC 15819 / NCTC 12168 / Alc 37) (Ochrobactrum anthropi) protein is Na(+)/H(+) antiporter NhaA 1.